The sequence spans 411 residues: uncharacterized protein (411 aa).

Residues 1–21 (MHSRILLLLLMFAFNVGLINC) form the signal peptide. The EGF-like domain occupies 28-67 (PQSNCKIRCENGGMCVFDLERPDFHSCICLLGVYTGDRCQ). 3 disulfide bridges follow: Cys-32-Cys-42, Cys-36-Cys-54, and Cys-56-Cys-66. The span at 78–97 (TATSDETSHPMNIQHQQSQA) shows a compositional bias: polar residues. Disordered stretches follow at residues 78 to 312 (TATS…EPIR) and 337 to 375 (HPIE…EYGM). Residues 100–230 (DDARRRDDER…VEKELNDKRT (131 aa)) are compositionally biased toward basic and acidic residues. Acidic residues predominate over residues 237–266 (FEYEGGDEEYPQVAEKEDEYDEGYETDNTE). The segment covering 267–276 (DVTITTTKTT) has biased composition (low complexity).

This is an uncharacterized protein from Caenorhabditis elegans.